A 1435-amino-acid polypeptide reads, in one-letter code: DNA polymerase III PolC-type (1435 aa).

Residues 420–576 enclose the Exonuclease domain; sequence YVVFDVETTG…YDTEATGYLL (157 aa).

It belongs to the DNA polymerase type-C family. PolC subfamily.

It localises to the cytoplasm. The catalysed reaction is DNA(n) + a 2'-deoxyribonucleoside 5'-triphosphate = DNA(n+1) + diphosphate. Required for replicative DNA synthesis. This DNA polymerase also exhibits 3' to 5' exonuclease activity. This Bacillus cereus (strain ATCC 14579 / DSM 31 / CCUG 7414 / JCM 2152 / NBRC 15305 / NCIMB 9373 / NCTC 2599 / NRRL B-3711) protein is DNA polymerase III PolC-type.